Consider the following 110-residue polypeptide: Snake venom vascular endothelial growth factor toxin HF (110 aa).

The residue at position 1 (Q1) is a Pyrrolidone carboxylic acid. Disulfide bonds link C14-C56, C45-C91, and C49-C93.

The protein belongs to the PDGF/VEGF growth factor family. Snake venom VEGF subfamily. Homodimer; disulfide-linked. Interacts with VEGF receptor-2 (KDR) with high affinity. In terms of tissue distribution, expressed by the venom gland.

It is found in the secreted. Snake venom VEGFs that may contribute to venom dispersion and prey subjugation by inducing vascular permeability and hypotension. This protein induces an increase in capillary permeability after intradermal injection, as well as a drastic hypotensive effect after intravenous injection. The hypotension is mediated by nitric oxide (NO), which is produced by VEGF-activated endothelium NO synthase. Also induces angiogenesis in vitro, probably through VEGF receptor (KDR/VEGFR-2) signaling. This is Snake venom vascular endothelial growth factor toxin HF from Vipera aspis aspis (Aspic viper).